Here is a 219-residue protein sequence, read N- to C-terminus: Vacuolar protein sorting-associated protein 32 homolog 2 (219 aa).

Coiled coils occupy residues lysine 10–glycine 41 and threonine 117–glutamine 176. Positions glutamate 168 to leucine 219 are disordered.

It belongs to the SNF7 family. Component of the endosomal sorting required for transport complex III (ESCRT-III), composed at least of VPS2, VPS20, VPS24 and VPS32. Interacts with SKD1. Interacts with BRO1/ALIX.

Its subcellular location is the endosome. Component of the ESCRT-III complex, which is required for multivesicular bodies (MVBs) formation and sorting of endosomal cargo proteins into MVBs. The ESCRT-III complex is probably involved in the concentration of MVB cargo. This Arabidopsis thaliana (Mouse-ear cress) protein is Vacuolar protein sorting-associated protein 32 homolog 2 (VPS32.2).